A 432-amino-acid chain; its full sequence is Probable N-acetylmuramoyl-L-alanine amidase AmiB (432 aa).

An N-terminal signal peptide occupies residues 1-20; the sequence is MKTKILFFLFFSTFSFSIFA. In terms of domain architecture, MurNAc-LAA spans 25–244; sequence IAIDPGHGGK…IAYMIYEGLV (220 aa). 2 LysM domains span residues 292–335 and 385–429; these read IRHI…SIKI and LYHK…KIKL.

It belongs to the N-acetylmuramoyl-L-alanine amidase 3 family.

The protein localises to the periplasm. It carries out the reaction Hydrolyzes the link between N-acetylmuramoyl residues and L-amino acid residues in certain cell-wall glycopeptides.. Its function is as follows. Cell-wall hydrolase involved in septum cleavage during cell division. This is Probable N-acetylmuramoyl-L-alanine amidase AmiB (amiB) from Haemophilus influenzae (strain ATCC 51907 / DSM 11121 / KW20 / Rd).